A 218-amino-acid chain; its full sequence is NADH-ubiquinone oxidoreductase 21 kDa subunit, mitochondrial (218 aa).

Residues 1-33 constitute a mitochondrion transit peptide; that stretch reads MSALRITTASAARMLRTSNAMMPSVMGAAQRRA. Positions 31-74 are disordered; it reads RRALSDSAEPARVPSVESARVPEKLAKEDSPLATPKRNSPDYNV. Over residues 50 to 60 the composition is skewed to basic and acidic residues; the sequence is RVPEKLAKEDS.

The protein belongs to the complex I NDUFS4 subunit family. Complex I is composed of about 40 different subunits. This is a component of the iron-sulfur (IP) fragment of the enzyme.

Its subcellular location is the mitochondrion inner membrane. In terms of biological role, accessory subunit of the mitochondrial membrane respiratory chain NADH dehydrogenase (Complex I), that is believed not to be involved in catalysis. Complex I functions in the transfer of electrons from NADH to the respiratory chain. The immediate electron acceptor for the enzyme is believed to be ubiquinone. The sequence is that of NADH-ubiquinone oxidoreductase 21 kDa subunit, mitochondrial (nuo-21) from Neurospora crassa (strain ATCC 24698 / 74-OR23-1A / CBS 708.71 / DSM 1257 / FGSC 987).